A 147-amino-acid polypeptide reads, in one-letter code: 3-dehydroquinate dehydratase (147 aa).

The Proton acceptor role is filled by Tyr23. Substrate-binding residues include Asn74, His80, and Asp87. The active-site Proton donor is His100. Substrate-binding positions include 101 to 102 (LS) and Arg111.

It belongs to the type-II 3-dehydroquinase family. Homododecamer.

The enzyme catalyses 3-dehydroquinate = 3-dehydroshikimate + H2O. It functions in the pathway metabolic intermediate biosynthesis; chorismate biosynthesis; chorismate from D-erythrose 4-phosphate and phosphoenolpyruvate: step 3/7. In terms of biological role, catalyzes a trans-dehydration via an enolate intermediate. This is 3-dehydroquinate dehydratase from Clostridium botulinum (strain Kyoto / Type A2).